Reading from the N-terminus, the 271-residue chain is Magnesium dechelatase SGR2, chloroplastic (271 aa).

The N-terminal 54 residues, 1–54 (MCSLATNLLLPSKMKPVFPEKLSTSSLCVTTRRSKMKNRSIVPVARLFGPAIFE), are a transit peptide targeting the chloroplast.

Belongs to the staygreen family. Interacts with the light harvesting complex II (LHCII). Interacts with the chlorophyll catabolic enzyme (CCE) RCCR.

Its subcellular location is the plastid. It localises to the chloroplast thylakoid membrane. The catalysed reaction is chlorophyll a + 2 H(+) = pheophytin a + Mg(2+). Functionally, magnesium chelatase involved in chlorophyll a degradation in the chlorophyll-protein complexes of photosystem I (PSI) and photosystem II (PSII). Contributes to the degradation of PSI and PSII in the thylakoid membranes. Required to trigger chlorophyll degradation during natural and dark-induced leaf senescence. Mediates chlorophyll degradation during embryo degreening. Recombinant SGR2 possesses high dechelating activity against chlorophyll a, very low activity against chlorophyllide a, and no activity against chlorophyll b. This chain is Magnesium dechelatase SGR2, chloroplastic, found in Arabidopsis thaliana (Mouse-ear cress).